We begin with the raw amino-acid sequence, 1319 residues long: Girdin homolog (1319 aa).

The Calponin-homology (CH) domain occupies 6–118; it reads ENWSHPLAFW…KLLLLLLGCA (113 aa). 3 coiled-coil regions span residues 141-173, 218-690, and 732-1096; these read ELAA…TDEV, TSEL…ADLI, and KRER…KKST. A disordered region spans residues 166–222; the sequence is KMKETDEVGGGGGSIEDVDSDDMESSTTSSSNGEIAIKQQDQSFLMSRSTSPTSELR. Residues 204–222 show a composition bias toward polar residues; sequence QQDQSFLMSRSTSPTSELR. 2 disordered regions span residues 1112–1236 and 1289–1308; these read INRR…SPAH and NVNL…LKPN. The span at 1118–1131 shows a compositional bias: polar residues; sequence TSNGGSTTEDSSVY.

Belongs to the CCDC88 family. As to expression, expressed in AQR and PQR gas-sensing neurons in hermaphrodites (at protein level).

The protein localises to the cytoplasm. Its subcellular location is the cytoskeleton. It is found in the cilium basal body. It localises to the microtubule organizing center. The protein resides in the centrosome. The protein localises to the centriole. Its function is as follows. Scaffolding protein that plays a role in ciliogenesis, cilium positioning and dendrite anchoring in sensory amphid neurons including AWB, AWA, AWC, ADL and ASI, the phasmid neurons PHA and PHB and the gas sensing neurons AQR, PQR, URX and BAG. Its role in cilium positioning may be through regulation of the localization of cell adhesion proteins such as the apical junction protein ajm-1, and the ciliary scaffolding protein Rootletin/che-10. Plays a more prominent role in regulating dendrite morphogenesis in AQR than in PQR neurons. Regulates localization of hmr-1 to the distal AQR dendrite. During embryonic elongation, required for the anchoring of URX and BAG dendrites to the presumptive nose. This Caenorhabditis elegans protein is Girdin homolog.